A 400-amino-acid chain; its full sequence is Enolase (400 aa).

Residue Gln154 coordinates (2R)-2-phosphoglycerate. Glu197 functions as the Proton donor in the catalytic mechanism. Asp233, Glu274, and Asp301 together coordinate Mg(2+). Positions 326, 355, 356, and 377 each coordinate (2R)-2-phosphoglycerate. Catalysis depends on Lys326, which acts as the Proton acceptor.

This sequence belongs to the enolase family. Mg(2+) serves as cofactor.

The protein resides in the cytoplasm. It localises to the secreted. It is found in the cell surface. It carries out the reaction (2R)-2-phosphoglycerate = phosphoenolpyruvate + H2O. It functions in the pathway carbohydrate degradation; glycolysis; pyruvate from D-glyceraldehyde 3-phosphate: step 4/5. Its function is as follows. Catalyzes the reversible conversion of 2-phosphoglycerate (2-PG) into phosphoenolpyruvate (PEP). It is essential for the degradation of carbohydrates via glycolysis. This Picrophilus torridus (strain ATCC 700027 / DSM 9790 / JCM 10055 / NBRC 100828 / KAW 2/3) protein is Enolase.